The primary structure comprises 342 residues: Ankyrin repeat domain-containing protein 2A (342 aa).

Residues 1–41 form a disordered region; the sequence is MASNSEKNPLLSDEKPKSTEENKSSKPESASGSSTSSAMPG. The segment covering 12 to 26 has biased composition (basic and acidic residues); that stretch reads SDEKPKSTEENKSSK. The segment covering 27 to 37 has biased composition (low complexity); the sequence is PESASGSSTSS. ANK repeat units follow at residues 217–246, 250–279, 283–312, and 316–342; these read EEESIVHQTASLGDVEGLKAALASGGNKDE, EGRTALHFACGYGELKCAQVLIDAGASVNA, NKNTPLHYAAGYGRKECVSLLLENGAAVTL, and DEKTPIDVAKLNSQLEVVKLLEKDAFL. A 1,2-diacyl-3-O-(beta-D-galactosyl)-sn-glycerol contacts are provided by His223 and Glu246. A 1,2-diacyl-sn-glycero-3-phospho-(1'-sn-glycerol)-binding residues include Tyr294 and Arg296.

As to quaternary structure, interacts with TOM20-4, CYTB5-E, CBR1, APX3, APX5, TOC34 and GRF6. Binds to chloroplast outer envelope membrane (OEM) protein targeting signals, as well as to chloroplasts. Interacts with OEP7. Binds to HSP17.8 via its ankyrin repeats, this interaction enhances chaperone activity and chloroplast binding. Also interacts with HSP17.4A, HSP17.6A and HSP18.1. Binds specifically to two chloroplast glycolipids, monogalactosyldiacylglycerol (MGDG) and phosphatidylglycerol (PG). Ubiquitously expressed at basal level.

The protein resides in the cytoplasm. It localises to the nucleus. It is found in the plastid. Its subcellular location is the chloroplast outer membrane. Its function is as follows. Exhibits chaperone activity toward chloroplast outer envelope membrane, mitochondrion outer membrane, endoplasmic reticulum membrane and peroxisomal proteins, by recruiting specific proteins containing a single transmembrane associated with an AKR2A-binding sequence (ABS) and subsequently binding glycolipids (e.g. monogalactosyldiacylglycerol (MGDG) and phosphatidylglycerol (PG)) present in the membrane of the target organelle. Seems to be involved in the regulation of hydrogen peroxide levels during biotic and abiotic stresses by optimizing the ascorbate peroxidase 3 (APX3) hydrogen peroxide-degrading activity. This regulation might be monitored by GRF6. Cytosolic targeting factor for chloroplast outer membrane (COM) proteins that mediates sorting and targeting of nascent chloroplast outer envelope membrane (OEM) proteins to the chloroplast. Facilitates the targeting of OEP7 to chloroplasts. Facilitates the targeting of APX3 to peroxisomes. Involved in cellular metabolism (e.g. peroxisome activity) and required for plant growth and development. This chain is Ankyrin repeat domain-containing protein 2A, found in Arabidopsis thaliana (Mouse-ear cress).